We begin with the raw amino-acid sequence, 435 residues long: S-locus-specific glycoprotein BS29-2 (435 aa).

A signal peptide spans 1–30 (MKGVGKPYENSHTSFLLVFFVLTLFSPAFS). A Bulb-type lectin domain is found at 33–155 (TLSSIESLKI…NKNDRSGFLW (123 aa)). Asn113, Asn120, Asn244, Asn260, and Asn389 each carry an N-linked (GlcNAc...) asparagine glycan. Residues 350-430 (CSGDGFTRMK…NGQDLYVRLA (81 aa)) form the PAN domain. Cystine bridges form between Cys380–Cys405 and Cys388–Cys390.

Stigma.

Involved in sporophytic self-incompatibility system (the inability of flowering plants to achieve self-fertilization). The protein is S-locus-specific glycoprotein BS29-2 (SLSG) of Brassica oleracea var. alboglabra (Chinese kale).